A 422-amino-acid chain; its full sequence is MRSVLSLALLAANVVTAAVVSPFDYSGYKVIRVPTQKDNVKEVQRIITDLNLDTWKYPKSEGQNADIVVPPSQITSFMERISGMSMEMMHEDLGMSISNETSFEAYSAGYAPDINWFKSYHSYQDHISYLQDLQGLFRTRSEYVDAGKSHEGRTIPALHIWGSGGKNSKPAIIFHGTIHAREWITTMVTEYLAWSLLSQYNKNADITSIVDNFDIWVFPIVNPDGFAFTQTSNRLWRKNRQPNPNARCPGRDLNRNYPYQWVGPGSSSNPCSDTYRGAQPGDGTEIKVHIANMKRIASYHGIAMFVDWHSYGQLFMSPYGYSCTARPPTDARHQELSRIFAQALRAVHGTPYRTGPICNTIYQVNGDSVDYALEVLKVKLSLTAELRDTGARGFVLPADQIIPSGEETLAGTVAMLKAVIRG.

Positions 1-17 (MRSVLSLALLAANVVTA) are cleaved as a signal peptide. The propeptide at 18–112 (AVVSPFDYSG…FEAYSAGYAP (95 aa)) is activation peptide. One can recognise a Peptidase M14 domain in the interval 119–419 (SYHSYQDHIS…AGTVAMLKAV (301 aa)). 2 residues coordinate Zn(2+): His-179 and Glu-182. Substrate-binding positions include 179-182 (HARE), Arg-237, and 254-255 (NR). Cys-248 and Cys-271 are joined by a disulfide. His-309 provides a ligand contact to Zn(2+). Residue 310–311 (SY) coordinates substrate. Catalysis depends on Glu-385, which acts as the Proton donor/acceptor.

Belongs to the peptidase M14 family. The cofactor is Zn(2+).

It localises to the secreted. Extracellular metalloprotease that contributes to pathogenicity. The chain is Metallocarboxypeptidase A (MCPA) from Trichophyton equinum (Horse ringworm fungus).